A 330-amino-acid chain; its full sequence is PTS system mannose-specific EIIAB component (330 aa).

Residues 2 to 130 form the PTS EIIA type-4 domain; the sequence is GIGIIIASHG…NIIKESKDGI (129 aa). The active-site Tele-phosphohistidine intermediate; for EIIA activity is histidine 10. Histidine 10 is subject to Phosphohistidine; by HPr. Residues 143-161 are hinge; it reads TAATEKVVNALQGAIPAGT. The PTS EIIB type-4 domain maps to 166-330; the sequence is GKLKINLARV…FELIQKANIK (165 aa). Histidine 181 acts as the Pros-phosphohistidine intermediate; for EIIB activity in catalysis. Histidine 181 carries the post-translational modification Phosphohistidine; by EIIA.

Homodimer.

The protein localises to the cytoplasm. The protein resides in the cell membrane. The enzyme catalyses D-mannose(out) + N(pros)-phospho-L-histidyl-[protein] = D-mannose 6-phosphate(in) + L-histidyl-[protein]. In terms of biological role, the phosphoenolpyruvate-dependent sugar phosphotransferase system (sugar PTS), a major carbohydrate active transport system, catalyzes the phosphorylation of incoming sugar substrates concomitantly with their translocation across the cell membrane. The enzyme II ManXYZ PTS system is involved in mannose transport. The sequence is that of PTS system mannose-specific EIIAB component from Streptococcus pyogenes serotype M6 (strain ATCC BAA-946 / MGAS10394).